A 107-amino-acid chain; its full sequence is UPF0145 protein YbjQ (107 aa).

This sequence belongs to the UPF0145 family.

This chain is UPF0145 protein YbjQ, found in Salmonella dublin (strain CT_02021853).